Reading from the N-terminus, the 71-residue chain is uncharacterized protein (71 aa).

This is an uncharacterized protein from Saccharomyces cerevisiae (strain ATCC 204508 / S288c) (Baker's yeast).